A 570-amino-acid chain; its full sequence is 2-isopropylmalate synthase (570 aa).

The Pyruvate carboxyltransferase domain maps to 31-305; that stretch reads PIWMSTDLRD…DPELDFSHIN (275 aa). Mg(2+) is bound by residues Asp40, His244, His246, and Asn280. A regulatory domain region spans residues 437 to 570; the sequence is SDGAIGYVSH…RRSSAQATVA (134 aa).

It belongs to the alpha-IPM synthase/homocitrate synthase family. LeuA type 2 subfamily. As to quaternary structure, homodimer. Requires Mg(2+) as cofactor.

Its subcellular location is the cytoplasm. It carries out the reaction 3-methyl-2-oxobutanoate + acetyl-CoA + H2O = (2S)-2-isopropylmalate + CoA + H(+). Its pathway is amino-acid biosynthesis; L-leucine biosynthesis; L-leucine from 3-methyl-2-oxobutanoate: step 1/4. In terms of biological role, catalyzes the condensation of the acetyl group of acetyl-CoA with 3-methyl-2-oxobutanoate (2-ketoisovalerate) to form 3-carboxy-3-hydroxy-4-methylpentanoate (2-isopropylmalate). The protein is 2-isopropylmalate synthase of Ralstonia pickettii (strain 12J).